Consider the following 292-residue polypeptide: ATP synthase gamma chain (292 aa).

The protein belongs to the ATPase gamma chain family. In terms of assembly, F-type ATPases have 2 components, CF(1) - the catalytic core - and CF(0) - the membrane proton channel. CF(1) has five subunits: alpha(3), beta(3), gamma(1), delta(1), epsilon(1). CF(0) has three main subunits: a, b and c.

It is found in the cell inner membrane. Functionally, produces ATP from ADP in the presence of a proton gradient across the membrane. The gamma chain is believed to be important in regulating ATPase activity and the flow of protons through the CF(0) complex. The chain is ATP synthase gamma chain from Hydrogenobaculum sp. (strain Y04AAS1).